The chain runs to 118 residues: Large ribosomal subunit protein bL20 (118 aa).

Belongs to the bacterial ribosomal protein bL20 family.

Functionally, binds directly to 23S ribosomal RNA and is necessary for the in vitro assembly process of the 50S ribosomal subunit. It is not involved in the protein synthesizing functions of that subunit. The polypeptide is Large ribosomal subunit protein bL20 (Protochlamydia amoebophila (strain UWE25)).